Here is a 136-residue protein sequence, read N- to C-terminus: MLQPKRTKFRKRHKGRNRGLANGTDVHFGTFGIKAVDRGQMTARQIEAARRTITRAIKRQGQVWIRVYPDTPVTEKPLEVRMGNGKGNVEYWVSKIQPGKVLYEIDGVPEEAAREAFALATSKLPLRTTFVTKTVM.

Basic residues predominate over residues 1-17 (MLQPKRTKFRKRHKGRN). The tract at residues 1-21 (MLQPKRTKFRKRHKGRNRGLA) is disordered.

It belongs to the universal ribosomal protein uL16 family. Part of the 50S ribosomal subunit.

Its function is as follows. Binds 23S rRNA and is also seen to make contacts with the A and possibly P site tRNAs. The polypeptide is Large ribosomal subunit protein uL16 (Buchnera aphidicola subsp. Acyrthosiphon kondoi (Acyrthosiphon kondoi symbiotic bacterium)).